Reading from the N-terminus, the 219-residue chain is KP6 killer toxin (219 aa).

The N-terminal stretch at 1 to 19 (MLIFSVLMYLGLLLAGASA) is a signal peptide. The propeptide occupies 20 to 27 (LPNGLSPR). Cystine bridges form between Cys-32-Cys-39, Cys-43-Cys-101, Cys-45-Cys-92, and Cys-62-Cys-78. N-linked (GlcNAc...) asparagine; by host glycosylation occurs at Asn-98. The propeptide occupies 106 to 138 (KRTIQDSATDTVDLGAELHRDDPPPTASDIGKR). A disordered region spans residues 120–142 (GAELHRDDPPPTASDIGKRGKRP).

Heterodimer of two small polypeptides that are not covalently linked.

It is found in the secreted. Functionally, this protein is lethal to sensitive cells of the same or related species. The KP6 alpha subunit is known to recognize some cellular receptors before interaction of the complex with KP6 beta, precipitating cell death. This is KP6 killer toxin from Ustilago maydis P6 virus (UmV6).